Here is a 1265-residue protein sequence, read N- to C-terminus: Nestin (1265 aa).

The segment at 1–16 (MELLGVRQPFGPQFQE) is head. The interval 17 to 52 (EKYQMLELNHRLESYLGRVKLLEEENKLLREEIHTL) is coil 1A. One can recognise an IF rod domain in the interval 17–324 (EKYQMLELNH…ALLDSEGLRI (308 aa)). Residues 53 to 64 (KSSRDPAGQRKA) are linker 1. Residues 65–160 (QEEALSQARR…QVHQENMETM (96 aa)) are coil 1B. The segment at 161–183 (QASLKQTKQVLMAPQRVQATSIP) is linker 12. Positions 184–203 (DLGQEYGYKAAQAWQEAANN) are coil 2A. Positions 204 to 206 (YQK) are linker 2. The interval 207–324 (QVGRLEESLN…ALLDSEGLRI (118 aa)) is coil 2B. The segment at 325–1265 (DRPTPNKTSS…EGDSWSSGDE (941 aa)) is tail. The segment covering 383 to 402 (PSWTLTRGTPQRPPSSTSMT) has biased composition (polar residues). Disordered stretches follow at residues 383 to 521 (PSWT…TEVS), 667 to 830 (FEVE…PDME), 863 to 1073 (HESL…KASQ), 1093 to 1116 (AQTTHASMDEHSSISPVNENLESS), and 1232 to 1265 (IRDDKQKDGQPAQSKIVQSDDSADEGDSWSSGDE). Residues 403-418 (EKTEDHISEETKRSAE) are compositionally biased toward basic and acidic residues. Positions 422–441 (DQLQQEKVQQDWTLESTLPK) are enriched in polar residues. A compositionally biased stretch (basic and acidic residues) spans 444–459 (AEPKPELQPEEIKVED). Polar residues predominate over residues 479 to 496 (LTSVPAEQQGSMSQTPET). Composition is skewed to acidic residues over residues 508–520 (EVSEDGKDEDTEV) and 730–739 (LNEDQSEAEE). 3 stretches are compositionally biased toward basic and acidic residues: residues 784–796 (YKSDEETSHHIGE), 803–819 (EKERIDQGHLNEKRFNT), and 863–897 (HESLDVVVQESERKGNLEKEDSGDADNMRDNKEED). Residues 901-910 (FEQNENQQLT) show a composition bias toward polar residues. Residues 911–935 (EHQHVHTEQVEDKPVHSHETQEHVN) are compositionally biased toward basic and acidic residues. Over residues 943 to 956 (SERSQQEQLEESSL) the composition is skewed to low complexity. The span at 1015-1043 (PNASQCFQNTSLLAAATPNEQPLTFTNEV) shows a compositional bias: polar residues. Residues 1061 to 1070 (SEEKSTDEPK) show a composition bias toward basic and acidic residues. 2 stretches are compositionally biased toward polar residues: residues 1105-1116 (SISPVNENLESS) and 1242-1251 (PAQSKIVQSD). Residues 1252-1265 (DSADEGDSWSSGDE) show a composition bias toward acidic residues.

Belongs to the intermediate filament family. Forms homodimers and homotetramers in vitro. In mixtures with other intermediate filament proteins such as vimentin and alpha-internexin, preferentially forms heterodimers. As to expression, widely expressed throughout the developing nervous system at 24 hours post-fertilization (hpf). As development progresses, expression becomes restricted to proliferative zones of the developing and postembryonic central nervous system. In the peripheral nervous system, expressed in the cranial ganglia. Also expressed in mesodermal muscle precursor cells and in cranial mesenchymal tissue.

In terms of biological role, promotes the disassembly of phosphorylated vimentin intermediate filaments (IF) during mitosis and may play a role in the trafficking and distribution of IF proteins and other cellular factors to daughter cells during progenitor cell division. Required for survival, renewal and mitogen-stimulated proliferation of neural progenitor cells. Required for brain and eye development. This is Nestin (nes) from Danio rerio (Zebrafish).